A 142-amino-acid polypeptide reads, in one-letter code: UPF0305 protein MK0666 (142 aa).

It belongs to the UPF0305 family.

This is UPF0305 protein MK0666 from Methanopyrus kandleri (strain AV19 / DSM 6324 / JCM 9639 / NBRC 100938).